The sequence spans 512 residues: Cytochrome P450 monooxygenase hkm5 (512 aa).

A helical transmembrane segment spans residues 18-38 (LIQLVRALLWVLVITIGGAIV). Asn184, Asn263, Asn275, Asn374, and Asn419 each carry an N-linked (GlcNAc...) asparagine glycan. Residue Cys456 participates in heme binding.

This sequence belongs to the cytochrome P450 family. Requires heme as cofactor.

The protein resides in the membrane. The enzyme catalyses hancockiamide A + reduced [NADPH--hemoprotein reductase] + O2 = hancockiamide G + oxidized [NADPH--hemoprotein reductase] + 2 H2O + H(+). It carries out the reaction hancockiamide B + reduced [NADPH--hemoprotein reductase] + O2 = hancockiamide C + oxidized [NADPH--hemoprotein reductase] + 2 H2O + H(+). The catalysed reaction is hancockiamide D + reduced [NADPH--hemoprotein reductase] + O2 = hancockiamide H + oxidized [NADPH--hemoprotein reductase] + 2 H2O + H(+). It participates in secondary metabolite biosynthesis. In terms of biological role, cytochrome P450 monooxygenase; part of the gene cluster that mediates the biosynthesis of hancockiamides, an unusual new family of N-cinnamoylated piperazines. The NRPS hkm10 and the NmrA-like reductase hkm9 are proposed to convert two molecules of L-Phe to the intermediary piperazine called xenocockiamide A. Xenocockiamide A is then converted to hancockiamide D via a series of hydroxylations and O-methylations. The tyrosinase hkm6 may catalyze an aromatic hydroxylation, then the 2-oxoglutarate-dependent Fe(II) dioxygenase hkm4 and the FAD-dependent phenol hydroxylase hkm7 may catalyze consecutive hydroxylations to install 2 more hydroxy groups, and the methyltransferase hkm8 probably catalyzes two methylations using 2 molecules of S-adenosyl-L-methionine (SAM). The NRPS hkm11 activates and transfers trans-cinnamate supplied by the PAL hkm12 to hancockiamide D and produces hancockiamide A. NRPS Hkm11 has the flexibility to tolerate the bulky hancockiamide G as a substrate and the absence of the acetyl-transferase hkm3 opens up the opportunity for hkm11 to introduce a second N-cinnamoyl moiety. The cytochrome P450 monooxygenase hkm5 catalyzes the methylenedioxy bridge formation, converting hancockiamide A into hancockiamide G. Hkm5 can also convert hancockiamide B into hancockiamide C, and hancockiamide D into hancockiamide H. The N-acetyltransferase hkm3 finally transfers an acetyl group to 1-N of piperazine, converting hancockiamide A into hancockiamide B and hancockiamide G into hancockiamide C. The chain is Cytochrome P450 monooxygenase hkm5 from Aspergillus hancockii.